Here is a 603-residue protein sequence, read N- to C-terminus: Protein Spindly (603 aa).

Position 1 is an N-acetylmethionine (methionine 1). The stretch at 1 to 442 (MESDVIADLR…LKLKYEPEEK (442 aa)) forms a coiled coil. Phosphoserine occurs at positions 513 and 553. A disordered region spans residues 542–577 (ALSERSRNTPNSPRLAAESRLQREVKQGKETASKLE). Over residues 561-577 (RLQREVKQGKETASKLE) the composition is skewed to basic and acidic residues.

Belongs to the Spindly family. As to quaternary structure, interacts with KNTC1 and ZW10. These interactions appear weak and may be transient or indirect. Interacts with dynein intermediate chain and dynactin (DCTN1). Interacts with the catalytically active form of USP45. In terms of processing, monoubiquitinated with'Lys-48' linkage. Deubiquitinated by USP45.

The protein resides in the cytoplasm. Its subcellular location is the cytoskeleton. The protein localises to the microtubule organizing center. It is found in the centrosome. It localises to the chromosome. The protein resides in the centromere. Its subcellular location is the kinetochore. The protein localises to the nucleus. It is found in the spindle pole. Required for the localization of dynein and dynactin to the mitotic kintochore. Dynein is believed to control the initial lateral interaction between the kinetochore and spindle microtubules and to facilitate the subsequent formation of end-on kinetochore-microtubule attachments mediated by the NDC80 complex. Also required for correct spindle orientation. Does not appear to be required for the removal of spindle assembly checkpoint (SAC) proteins from the kinetochore upon bipolar spindle attachment. Acts as an adapter protein linking the dynein motor complex to various cargos and converts dynein from a non-processive to a highly processive motor in the presence of dynactin. Facilitates the interaction between dynein and dynactin and activates dynein processivity (the ability to move along a microtubule for a long distance without falling off the track). Plays a role in cell migration. This Bos taurus (Bovine) protein is Protein Spindly.